The chain runs to 113 residues: ATP-dependent Clp protease adapter protein ClpS (113 aa).

The tract at residues 1 to 24 (MTAQLHMMSDKHDQDNDASVLLQT) is disordered.

It belongs to the ClpS family. In terms of assembly, binds to the N-terminal domain of the chaperone ClpA.

Its function is as follows. Involved in the modulation of the specificity of the ClpAP-mediated ATP-dependent protein degradation. The protein is ATP-dependent Clp protease adapter protein ClpS of Ruegeria pomeroyi (strain ATCC 700808 / DSM 15171 / DSS-3) (Silicibacter pomeroyi).